The following is a 360-amino-acid chain: Protein-glutamate methylesterase/protein-glutamine glutaminase 3 (360 aa).

The Response regulatory domain maps to 14 to 131; the sequence is RVLVIDDSAT…AEGVQAYAEE (118 aa). Residue Asp65 is modified to 4-aspartylphosphate. One can recognise a CheB-type methylesterase domain in the interval 169-360; the sequence is AGKDGRVVAV…AGKLMELDGA (192 aa). Residues Ser181, His207, and Asp303 contribute to the active site.

Belongs to the CheB family. Post-translationally, phosphorylated by CheA. Phosphorylation of the N-terminal regulatory domain activates the methylesterase activity.

The protein localises to the cytoplasm. The catalysed reaction is [protein]-L-glutamate 5-O-methyl ester + H2O = L-glutamyl-[protein] + methanol + H(+). It carries out the reaction L-glutaminyl-[protein] + H2O = L-glutamyl-[protein] + NH4(+). Functionally, involved in chemotaxis. Part of a chemotaxis signal transduction system that modulates chemotaxis in response to various stimuli. Catalyzes the demethylation of specific methylglutamate residues introduced into the chemoreceptors (methyl-accepting chemotaxis proteins or MCP) by CheR. Also mediates the irreversible deamidation of specific glutamine residues to glutamic acid. This chain is Protein-glutamate methylesterase/protein-glutamine glutaminase 3, found in Burkholderia thailandensis (strain ATCC 700388 / DSM 13276 / CCUG 48851 / CIP 106301 / E264).